A 150-amino-acid polypeptide reads, in one-letter code: Large ribosomal subunit protein bL9 (150 aa).

It belongs to the bacterial ribosomal protein bL9 family.

Binds to the 23S rRNA. This is Large ribosomal subunit protein bL9 from Polynucleobacter asymbioticus (strain DSM 18221 / CIP 109841 / QLW-P1DMWA-1) (Polynucleobacter necessarius subsp. asymbioticus).